Reading from the N-terminus, the 253-residue chain is Phosphoribosylaminoimidazole-succinocarboxamide synthase (253 aa).

Belongs to the SAICAR synthetase family.

The catalysed reaction is 5-amino-1-(5-phospho-D-ribosyl)imidazole-4-carboxylate + L-aspartate + ATP = (2S)-2-[5-amino-1-(5-phospho-beta-D-ribosyl)imidazole-4-carboxamido]succinate + ADP + phosphate + 2 H(+). It functions in the pathway purine metabolism; IMP biosynthesis via de novo pathway; 5-amino-1-(5-phospho-D-ribosyl)imidazole-4-carboxamide from 5-amino-1-(5-phospho-D-ribosyl)imidazole-4-carboxylate: step 1/2. This chain is Phosphoribosylaminoimidazole-succinocarboxamide synthase, found in Dinoroseobacter shibae (strain DSM 16493 / NCIMB 14021 / DFL 12).